Reading from the N-terminus, the 54-residue chain is UPF0391 membrane protein Mfla_0947/Mfla_1091 (54 aa).

Transmembrane regions (helical) follow at residues 6–26 (VIFFVIALIAAFFGFSGIAAG) and 30–50 (IAKILFFVFLIITIVSLVAGI).

The protein belongs to the UPF0391 family.

The protein resides in the cell membrane. This is UPF0391 membrane protein Mfla_0947/Mfla_1091 from Methylobacillus flagellatus (strain ATCC 51484 / DSM 6875 / VKM B-1610 / KT).